The chain runs to 85 residues: uncharacterized protein (85 aa).

Helical transmembrane passes span 13–35 (KWLAVAICLAMVGMAVMPAFQPL) and 59–81 (EGIVITATLAAAAATAELVHLLL).

Its subcellular location is the cell membrane. This is an uncharacterized protein from Archaeoglobus fulgidus (strain ATCC 49558 / DSM 4304 / JCM 9628 / NBRC 100126 / VC-16).